Here is a 647-residue protein sequence, read N- to C-terminus: Threonine--tRNA ligase (647 aa).

The TGS domain maps to 1 to 60; it reads MQVTIEDQSLEAAAGEACGQVLSRAVSGKRLKNAVACLVDGQPRDLAFPLPEDAHELALV. The catalytic stretch occupies residues 242–533; that stretch reads DHRKLGAQLD…LIEHTAGALP (292 aa). Residues C334, H385, and H510 each coordinate Zn(2+).

This sequence belongs to the class-II aminoacyl-tRNA synthetase family. As to quaternary structure, homodimer. Requires Zn(2+) as cofactor.

It is found in the cytoplasm. The enzyme catalyses tRNA(Thr) + L-threonine + ATP = L-threonyl-tRNA(Thr) + AMP + diphosphate + H(+). Catalyzes the attachment of threonine to tRNA(Thr) in a two-step reaction: L-threonine is first activated by ATP to form Thr-AMP and then transferred to the acceptor end of tRNA(Thr). Also edits incorrectly charged L-seryl-tRNA(Thr). This chain is Threonine--tRNA ligase, found in Solidesulfovibrio magneticus (strain ATCC 700980 / DSM 13731 / RS-1) (Desulfovibrio magneticus).